The following is a 209-amino-acid chain: Claudin-4 (209 aa).

Over 1-9 (MASMGLQVM) the chain is Cytoplasmic. The interaction with EPHA2 stretch occupies residues 1 to 103 (MASMGLQVMG…GVLLSVVGGK (103 aa)). A helical membrane pass occupies residues 10-30 (GIALAVLGWLGAILSCALPMW). The Extracellular portion of the chain corresponds to 31–81 (RVTAFIGSNIVTSQTIWEGLWMNCVVQSTGQMQCKVYDSLLALPQDLQAAR). A disulfide bridge links C54 with C64. A helical membrane pass occupies residues 82–102 (ALIVICIILAVFGVLLSVVGG). The Cytoplasmic portion of the chain corresponds to 103 to 117 (KCTNCVDDESSKAKI). A helical transmembrane segment spans residues 118–138 (MIVAGVVFLLAGLLVMVPVSW). The Extracellular segment spans residues 139–160 (TANNVIRDFYNPLVASGQKREM). Residues 161–181 (GASLYVGWAAAGLLILGGALL) traverse the membrane as a helical segment. Topologically, residues 182–209 (CFNCPPRNDKPYSAKYSAARSAPASNYV) are cytoplasmic. Phosphotyrosine; by EPHA2 is present on Y208. Residues 208–209 (YV) are interactions with TJP1, TJP2 and TJP3.

The protein belongs to the claudin family. Interacts with EPHA2; phosphorylates CLDN4 and may regulate tight junctions. Directly interacts with TJP1/ZO-1, TJP2/ZO-2 and TJP3/ZO-3. Interacts with CLDN1. Interacts with CLDN8. Phosphorylated. Phosphorylation by EPHA2 is stimulated by EFNA1 and alters interaction with TJP1.

Its subcellular location is the cell junction. The protein localises to the tight junction. It localises to the cell membrane. Channel-forming tight junction protein that mediates paracellular chloride transport in the kidney. Plays a critical role in the paracellular reabsorption of filtered chloride in the kidney collecting ducts. Claudins play a major role in tight junction-specific obliteration of the intercellular space, through calcium-independent cell-adhesion activity. This chain is Claudin-4 (CLDN4), found in Bos taurus (Bovine).